Reading from the N-terminus, the 156-residue chain is Small ribosomal subunit protein uS7 (156 aa).

It belongs to the universal ribosomal protein uS7 family. Part of the 30S ribosomal subunit. Contacts proteins S9 and S11.

Functionally, one of the primary rRNA binding proteins, it binds directly to 16S rRNA where it nucleates assembly of the head domain of the 30S subunit. Is located at the subunit interface close to the decoding center, probably blocks exit of the E-site tRNA. The protein is Small ribosomal subunit protein uS7 of Prochlorococcus marinus (strain SARG / CCMP1375 / SS120).